We begin with the raw amino-acid sequence, 52 residues long: UPF0391 membrane protein XOO4217 (52 aa).

The next 2 helical transmembrane spans lie at 5-25 (AMIF…GIAG) and 27-47 (ATNI…ISMF).

It belongs to the UPF0391 family.

It localises to the cell membrane. The chain is UPF0391 membrane protein XOO4217 from Xanthomonas oryzae pv. oryzae (strain KACC10331 / KXO85).